Reading from the N-terminus, the 314-residue chain is L-lactate dehydrogenase 2 (314 aa).

NAD(+)-binding positions include valine 16, aspartate 37, lysine 42, tyrosine 68, and 82-83; that span reads GL. Residues glutamine 85, arginine 91, and 123-126 each bind substrate; that span reads NPVD. NAD(+)-binding positions include 121-123 and serine 146; that span reads ATN. Residue 151–154 participates in substrate binding; it reads DSAR. Beta-D-fructose 1,6-bisphosphate is bound by residues arginine 156 and histidine 171. Histidine 178 serves as the catalytic Proton acceptor. Tyrosine 223 carries the phosphotyrosine modification. Threonine 232 provides a ligand contact to substrate.

It belongs to the LDH/MDH superfamily. LDH family. Homotetramer.

It is found in the cytoplasm. The catalysed reaction is (S)-lactate + NAD(+) = pyruvate + NADH + H(+). It participates in fermentation; pyruvate fermentation to lactate; (S)-lactate from pyruvate: step 1/1. Allosterically activated by fructose 1,6-bisphosphate (FBP). In terms of biological role, catalyzes the conversion of lactate to pyruvate. The chain is L-lactate dehydrogenase 2 from Bacillus cereus (strain ATCC 10987 / NRS 248).